Reading from the N-terminus, the 239-residue chain is Tumor protein p53-inducible nuclear protein 1 (239 aa).

An LIR motif is present at residues 25-37 (EKEDDEWILVDFI).

As to quaternary structure, interacts with p53/TP53 and HIPK2. Interacts with PRKCG, GABARAP, GABARAPL1, GABARAPL2, MAP1LC3A, MAP1LC3B and MAP1LC3C. As to expression, specifically expressed by acinar cells of chronic pancreatitis tissue.

It is found in the cytoplasm. The protein resides in the cytosol. The protein localises to the nucleus. Its subcellular location is the PML body. It localises to the cytoplasmic vesicle. It is found in the autophagosome. Functionally, antiproliferative and proapoptotic protein involved in cell stress response which acts as a dual regulator of transcription and autophagy. Acts as a positive regulator of autophagy. In response to cellular stress or activation of autophagy, relocates to autophagosomes where it interacts with autophagosome-associated proteins GABARAP, GABARAPL1/L2, MAP1LC3A/B/C and regulates autophagy. Acts as an antioxidant and plays a major role in p53/TP53-driven oxidative stress response. Possesses both a p53/TP53-independent intracellular reactive oxygen species (ROS) regulatory function and a p53/TP53-dependent transcription regulatory function. Positively regulates p53/TP53 and p73/TP73 and stimulates their capacity to induce apoptosis and regulate cell cycle. In response to double-strand DNA breaks, promotes p53/TP53 phosphorylation on 'Ser-46' and subsequent apoptosis. Acts as a tumor suppressor by inducing cell death by an autophagy and caspase-dependent mechanism. Can reduce cell migration by regulating the expression of SPARC. The sequence is that of Tumor protein p53-inducible nuclear protein 1 (Trp53inp1) from Rattus norvegicus (Rat).